Here is a 77-residue protein sequence, read N- to C-terminus: U8-lycotoxin-Ls1w (77 aa).

Positions 1–20 (MKLIIFTGLVLFAIVSLIEA) are cleaved as a signal peptide. Residues 21–26 (QAENEK) constitute a propeptide that is removed on maturation.

Belongs to the neurotoxin 19 (CSTX) family. 08 (U8-Lctx) subfamily. Contains 4 disulfide bonds. As to expression, expressed by the venom gland.

It is found in the secreted. The polypeptide is U8-lycotoxin-Ls1w (Lycosa singoriensis (Wolf spider)).